The sequence spans 147 residues: Cyanate hydratase (147 aa).

Residues Arg88, Glu91, and Ser114 contribute to the active site.

This sequence belongs to the cyanase family.

The catalysed reaction is cyanate + hydrogencarbonate + 3 H(+) = NH4(+) + 2 CO2. Its function is as follows. Catalyzes the reaction of cyanate with bicarbonate to produce ammonia and carbon dioxide. This is Cyanate hydratase from Albidiferax ferrireducens (strain ATCC BAA-621 / DSM 15236 / T118) (Rhodoferax ferrireducens).